An 88-amino-acid chain; its full sequence is Large ribosomal subunit protein eL31 (88 aa).

The protein belongs to the eukaryotic ribosomal protein eL31 family.

The sequence is that of Large ribosomal subunit protein eL31 (rpl31e) from Sulfurisphaera tokodaii (strain DSM 16993 / JCM 10545 / NBRC 100140 / 7) (Sulfolobus tokodaii).